The sequence spans 181 residues: Ferritin heavy chain (181 aa).

At Met1 the chain carries N-acetylmethionine. Thr2 carries the N-acetylthreonine; in Ferritin heavy chain, N-terminally processed modification. Residues 11-160 (QNYHQDSEAA…DHITNLHRMG (150 aa)) form the Ferritin-like diiron domain. At Ser179 the chain carries Phosphoserine.

Belongs to the ferritin family. In terms of assembly, oligomer of 24 subunits. There are two types of subunits: L (light) chain and H (heavy) chain. The major chain can be light or heavy, depending on the species and tissue type. The functional molecule forms a roughly spherical shell with a diameter of 12 nm and contains a central cavity into which the insoluble mineral iron core is deposited. Interacts with NCOA4; NCOA4 promotes targeting of the iron-binding ferritin complex to autolysosomes following starvation or iron depletion. (Microbial infection) Interacts with classical swine fever virus protein NS4B. As to quaternary structure, (Microbial infection) Interacts with Porcine circovirus 2 ORF4 protein.

The protein localises to the cytoplasm. Its subcellular location is the lysosome. It localises to the cytoplasmic vesicle. It is found in the autophagosome. It carries out the reaction 4 Fe(2+) + O2 + 4 H(+) = 4 Fe(3+) + 2 H2O. In terms of biological role, stores iron in a soluble, non-toxic, readily available form. Important for iron homeostasis. Has ferroxidase activity. Iron is taken up in the ferrous form and deposited as ferric hydroxides after oxidation. Also plays a role in delivery of iron to cells. Mediates iron uptake in capsule cells of the developing kidney. Delivery to lysosomes is mediated by the cargo receptor NCOA4 for autophagic degradation and release of iron. Functionally, (Microbial infection) Is unable to assume its function upon interaction with viral proteins, thereby increasing Fe concentration in the cytoplasm. This would inhibit the accumulation of reactive oxygen in host cells, leading to reduced apoptosis and increasing the survival of virus infected cell. This Sus scrofa (Pig) protein is Ferritin heavy chain (FTH1).